The chain runs to 20 residues: Bulb protein (20 aa).

The segment at 1-20 is disordered; the sequence is APDVHTRXTQNGLPPGXLPS.

This Narcissus pseudonarcissus (Daffodil) protein is Bulb protein.